A 158-amino-acid chain; its full sequence is 6,7-dimethyl-8-ribityllumazine synthase (158 aa).

5-amino-6-(D-ribitylamino)uracil contacts are provided by residues Phe24, 58–60, and 82–84; these read AFE and AVI. 87 to 88 contributes to the (2S)-2-hydroxy-3-oxobutyl phosphate binding site; the sequence is GT. The Proton donor role is filled by His90. Phe115 serves as a coordination point for 5-amino-6-(D-ribitylamino)uracil. A (2S)-2-hydroxy-3-oxobutyl phosphate-binding site is contributed by Arg129.

The protein belongs to the DMRL synthase family. Forms an icosahedral capsid composed of 60 subunits, arranged as a dodecamer of pentamers.

It carries out the reaction (2S)-2-hydroxy-3-oxobutyl phosphate + 5-amino-6-(D-ribitylamino)uracil = 6,7-dimethyl-8-(1-D-ribityl)lumazine + phosphate + 2 H2O + H(+). It functions in the pathway cofactor biosynthesis; riboflavin biosynthesis; riboflavin from 2-hydroxy-3-oxobutyl phosphate and 5-amino-6-(D-ribitylamino)uracil: step 1/2. In terms of biological role, catalyzes the formation of 6,7-dimethyl-8-ribityllumazine by condensation of 5-amino-6-(D-ribitylamino)uracil with 3,4-dihydroxy-2-butanone 4-phosphate. This is the penultimate step in the biosynthesis of riboflavin. This is 6,7-dimethyl-8-ribityllumazine synthase from Pseudomonas putida (strain GB-1).